Consider the following 376-residue polypeptide: Queuine tRNA-ribosyltransferase (376 aa).

The active-site Proton acceptor is D89. Residues 89 to 93 (DSGGF), D143, Q194, and G221 each bind substrate. The RNA binding stretch occupies residues 252–258 (GVGIPSN). The active-site Nucleophile is D271. Residues 276-280 (ARNGR) are RNA binding; important for wobble base 34 recognition. Zn(2+)-binding residues include C309, C311, C314, and H340.

The protein belongs to the queuine tRNA-ribosyltransferase family. As to quaternary structure, homodimer. Within each dimer, one monomer is responsible for RNA recognition and catalysis, while the other monomer binds to the replacement base PreQ1. Zn(2+) serves as cofactor.

It carries out the reaction 7-aminomethyl-7-carbaguanine + guanosine(34) in tRNA = 7-aminomethyl-7-carbaguanosine(34) in tRNA + guanine. The protein operates within tRNA modification; tRNA-queuosine biosynthesis. In terms of biological role, catalyzes the base-exchange of a guanine (G) residue with the queuine precursor 7-aminomethyl-7-deazaguanine (PreQ1) at position 34 (anticodon wobble position) in tRNAs with GU(N) anticodons (tRNA-Asp, -Asn, -His and -Tyr). Catalysis occurs through a double-displacement mechanism. The nucleophile active site attacks the C1' of nucleotide 34 to detach the guanine base from the RNA, forming a covalent enzyme-RNA intermediate. The proton acceptor active site deprotonates the incoming PreQ1, allowing a nucleophilic attack on the C1' of the ribose to form the product. After dissociation, two additional enzymatic reactions on the tRNA convert PreQ1 to queuine (Q), resulting in the hypermodified nucleoside queuosine (7-(((4,5-cis-dihydroxy-2-cyclopenten-1-yl)amino)methyl)-7-deazaguanosine). The polypeptide is Queuine tRNA-ribosyltransferase (Clostridium botulinum (strain Hall / ATCC 3502 / NCTC 13319 / Type A)).